The sequence spans 262 residues: Hydroxyethylthiazole kinase (262 aa).

Methionine 50 is a substrate binding site. Residues arginine 125 and threonine 171 each coordinate ATP. Substrate is bound at residue glycine 198.

It belongs to the Thz kinase family. It depends on Mg(2+) as a cofactor.

The enzyme catalyses 5-(2-hydroxyethyl)-4-methylthiazole + ATP = 4-methyl-5-(2-phosphooxyethyl)-thiazole + ADP + H(+). It participates in cofactor biosynthesis; thiamine diphosphate biosynthesis; 4-methyl-5-(2-phosphoethyl)-thiazole from 5-(2-hydroxyethyl)-4-methylthiazole: step 1/1. In terms of biological role, catalyzes the phosphorylation of the hydroxyl group of 4-methyl-5-beta-hydroxyethylthiazole (THZ). This Shigella boydii serotype 4 (strain Sb227) protein is Hydroxyethylthiazole kinase.